We begin with the raw amino-acid sequence, 144 residues long: Large ribosomal subunit protein uL15 (144 aa).

The tract at residues Met-1–Leu-57 is disordered. Over residues Arg-21–Gly-31 the composition is skewed to gly residues.

This sequence belongs to the universal ribosomal protein uL15 family. As to quaternary structure, part of the 50S ribosomal subunit.

Functionally, binds to the 23S rRNA. In Pseudomonas entomophila (strain L48), this protein is Large ribosomal subunit protein uL15.